The primary structure comprises 320 residues: Ferrochelatase (320 aa).

Fe cation-binding residues include H194 and E275.

It belongs to the ferrochelatase family. Monomer.

Its subcellular location is the cytoplasm. It catalyses the reaction heme b + 2 H(+) = protoporphyrin IX + Fe(2+). It participates in porphyrin-containing compound metabolism; protoheme biosynthesis; protoheme from protoporphyrin-IX: step 1/1. In terms of biological role, catalyzes the ferrous insertion into protoporphyrin IX. The polypeptide is Ferrochelatase (Salmonella schwarzengrund (strain CVM19633)).